The primary structure comprises 406 residues: 2-epi-valiolone synthase (406 aa).

Positions 1-21 are disordered; the sequence is MPSTGSTPILAHDVKSPHRGS. NAD(+)-binding positions include 105–108, 137–141, 161–162, lysine 174, lysine 183, and 201–204; these read EPSK, GVLCD, TS, and CLAT. The Zn(2+) site is built by glutamate 216, histidine 287, and histidine 304.

It belongs to the sugar phosphate cyclases superfamily. EVS family. NAD(+) serves as cofactor. Co(2+) is required as a cofactor. The cofactor is Zn(2+).

It catalyses the reaction D-sedoheptulose 7-phosphate = 2-epi-valiolone + phosphate. Catalyzes the conversion of sedoheptulose 7-phosphate to 2-epi-valiolone, which may serve as an alternative precursor for aminocyclitol biosynthesis. The sequence is that of 2-epi-valiolone synthase from Stigmatella aurantiaca (strain DW4/3-1).